The sequence spans 220 residues: Thiopurine S-methyltransferase (220 aa).

Residues tryptophan 10, leucine 45, glutamate 66, and arginine 123 each contribute to the S-adenosyl-L-methionine site.

Belongs to the class I-like SAM-binding methyltransferase superfamily. TPMT family.

The protein localises to the cytoplasm. It catalyses the reaction S-adenosyl-L-methionine + a thiopurine = S-adenosyl-L-homocysteine + a thiopurine S-methylether.. This chain is Thiopurine S-methyltransferase, found in Nitrosospira multiformis (strain ATCC 25196 / NCIMB 11849 / C 71).